The chain runs to 194 residues: MSMITITESAQQHFGKLLAQQPEGTNIRVFVVNPGTQNAECGVSYCPPEAVEASDTKIELELFDAYLDELSLPFLDDAEIDFVTDKMGSQLTLKAPNAKVRKVSDDATLMERVDYAIQTQVNPQLAGHGGNVSLAEITEDGVAILQFGGGCNGCSMVDVTLKEGIEKELLAQFAGELTGVRDVTEHARGEHSYY.

[4Fe-4S] cluster contacts are provided by Cys-151 and Cys-154.

Belongs to the NfuA family. Homodimer. Requires [4Fe-4S] cluster as cofactor.

Its function is as follows. Involved in iron-sulfur cluster biogenesis. Binds a 4Fe-4S cluster, can transfer this cluster to apoproteins, and thereby intervenes in the maturation of Fe/S proteins. Could also act as a scaffold/chaperone for damaged Fe/S proteins. This Photobacterium profundum (strain SS9) protein is Fe/S biogenesis protein NfuA.